Here is a 342-residue protein sequence, read N- to C-terminus: Anthranilate phosphoribosyltransferase (342 aa).

Residues Gly-79, 82–83 (GD), Thr-87, 89–92 (NVST), 107–115 (KHGNRSVSS), and Ser-119 contribute to the 5-phospho-alpha-D-ribose 1-diphosphate site. Gly-79 is a binding site for anthranilate. Ser-91 contributes to the Mg(2+) binding site. Residue Asn-110 coordinates anthranilate. Position 165 (Arg-165) interacts with anthranilate. Asp-223 and Glu-224 together coordinate Mg(2+).

This sequence belongs to the anthranilate phosphoribosyltransferase family. Homodimer. Mg(2+) is required as a cofactor.

It carries out the reaction N-(5-phospho-beta-D-ribosyl)anthranilate + diphosphate = 5-phospho-alpha-D-ribose 1-diphosphate + anthranilate. It participates in amino-acid biosynthesis; L-tryptophan biosynthesis; L-tryptophan from chorismate: step 2/5. Functionally, catalyzes the transfer of the phosphoribosyl group of 5-phosphorylribose-1-pyrophosphate (PRPP) to anthranilate to yield N-(5'-phosphoribosyl)-anthranilate (PRA). The sequence is that of Anthranilate phosphoribosyltransferase from Aeromonas hydrophila subsp. hydrophila (strain ATCC 7966 / DSM 30187 / BCRC 13018 / CCUG 14551 / JCM 1027 / KCTC 2358 / NCIMB 9240 / NCTC 8049).